A 650-amino-acid chain; its full sequence is XK-related protein 4 (650 aa).

Positions 1–15 are enriched in basic and acidic residues; sequence MAAKSDGRLKMKKSS. A disordered region spans residues 1-44; it reads MAAKSDGRLKMKKSSDVAFTPLQNSDHSGSVQGLAPGLPSGSGA. Positions 21-31 are enriched in polar residues; sequence PLQNSDHSGSV. 2 consecutive transmembrane segments (helical) span residues 114–134 and 144–164; these read WILA…WLAV and WFGL…VFSF. The residue at position 200 (Ser-200) is a Phosphoserine. A disordered region spans residues 200–238; it reads SAAGEGEARPSTPQRQASNASKSNIAAANSGSNSSGATR. A compositionally biased stretch (low complexity) spans 216–238; that stretch reads ASNASKSNIAAANSGSNSSGATR. Helical transmembrane passes span 248–268, 306–326, 331–351, 365–385, 396–418, 428–448, 457–477, and 487–507; these read CSFC…GQIW, HLLA…CIIV, LQAL…WALA, KPIS…TIAA, VFQL…WIVH, WEEI…WFNV, LFIY…LWYL, and FAIP…VFML.

It belongs to the XK family. As to quaternary structure, homodimer; homodimerization takes place upon caspase cleavage. Interacts with the processed C-terminus of XRCC4 (protein XRCC4, C-terminus); interaction promotes the phospholipid scramblase activity. Undergoes proteolytic processing by caspase-3 (CASP3), caspase-6 (CASP6) and caspase-7 (CASP7) to generate the XK-related protein 4, processed form, leading to its activation.

The protein localises to the cell membrane. The catalysed reaction is a 1,2-diacyl-sn-glycero-3-phospho-L-serine(in) = a 1,2-diacyl-sn-glycero-3-phospho-L-serine(out). With respect to regulation, phospholipid scramblase activity is activated upon caspase cleavage to generate the XK-related protein 4, processed form. Does not act prior the onset of apoptosis. Its activity is regulated as follows. Homodimerizes upon caspase cleavage. Phospholipid scramblase activity is activated following interaction with the processed C-terminus of XRCC4 (protein XRCC4, C-terminus). Functionally, phospholipid scramblase that promotes phosphatidylserine exposure on apoptotic cell surface. Phosphatidylserine is a specific marker only present at the surface of apoptotic cells and acts as a specific signal for engulfment. The protein is XK-related protein 4 of Homo sapiens (Human).